The sequence spans 575 residues: Methionine--tRNA ligase, mitochondrial (575 aa).

Positions 20–32 (PIFYPNAKPHLGH) match the 'HIGH' region motif. The short motif at 341–345 (KMSKS) is the 'KMSKS' region element. Lys-344 contributes to the ATP binding site.

The protein belongs to the class-I aminoacyl-tRNA synthetase family.

Its subcellular location is the mitochondrion matrix. The catalysed reaction is tRNA(Met) + L-methionine + ATP = L-methionyl-tRNA(Met) + AMP + diphosphate. Catalyzes the attachment of methionine to tRNA(Met) in the mitochondrion. The polypeptide is Methionine--tRNA ligase, mitochondrial (MSM1) (Saccharomyces cerevisiae (strain ATCC 204508 / S288c) (Baker's yeast)).